An 835-amino-acid polypeptide reads, in one-letter code: Cap-specific mRNA (nucleoside-2'-O-)-methyltransferase 1 (835 aa).

A disordered region spans residues 1-67 (MKRRTDPECT…EGKQHSSDSF (67 aa)). A Bipartite nuclear localization signal motif is present at residues 2–19 (KRRTDPECTAPIKKQKKR). Phosphoserine occurs at positions 28, 31, 53, 66, and 91. Residues 37–54 (SSVSHGAKASTTSLSGSD) are compositionally biased toward polar residues. Basic and acidic residues predominate over residues 57 to 67 (TEGKQHSSDSF). The G-patch domain maps to 87–133 (YNSVSQKLMAKMGFREGEGLGKYSQGRKDIVEASSQKGRRGLGLTLR). Lysine 108 carries the N6-acetyllysine modification. Substrate is bound by residues 203 to 207 (KSVFD) and arginine 218. The region spanning 231-450 (FFLNRAAMKM…ERYVVCKGLK (220 aa)) is the RrmJ-type SAM-dependent 2'-O-MTase domain. Asparagine 234 lines the S-adenosyl-L-methionine pocket. Residue lysine 239 is part of the active site. Residues 277–283 (CAGPGGF) and 335–336 (DI) each bind S-adenosyl-L-methionine. The active site involves aspartate 364. Position 374–376 (374–376 (NLQ)) interacts with substrate. The active-site Proton acceptor is the lysine 404. Asparagine 439 lines the substrate pocket. An interaction with POLR2A region spans residues 727 to 835 (SSGTPKLSYT…VLSFIQMHRA (109 aa)). Residues 752–786 (RTVNEPWTMGFSKSFKKKFFYNKKTKDSTFDLPAD) enclose the WW domain.

As to quaternary structure, interacts with POLR2A (via C-terminus).

It is found in the nucleus. The catalysed reaction is a 5'-end (N(7)-methyl 5'-triphosphoguanosine)-ribonucleoside in mRNA + S-adenosyl-L-methionine = a 5'-end (N(7)-methyl 5'-triphosphoguanosine)-(2'-O-methyl-ribonucleoside) in mRNA + S-adenosyl-L-homocysteine + H(+). In terms of biological role, S-adenosyl-L-methionine-dependent methyltransferase that mediates mRNA cap1 2'-O-ribose methylation to the 5'-cap structure of mRNAs. Methylates the ribose of the first nucleotide of a m(7)GpppG-capped mRNA and small nuclear RNA (snRNA) to produce m(7)GpppRm (cap1). Displays a preference for cap0 transcripts. Cap1 modification is linked to higher levels of translation. May be involved in the interferon response pathway. The chain is Cap-specific mRNA (nucleoside-2'-O-)-methyltransferase 1 (CMTR1) from Homo sapiens (Human).